The sequence spans 736 residues: Elongation factor 2 (736 aa).

Residues 18–234 (TRVRNIGIIA…VIDAYTASDK (217 aa)) form the tr-type G domain. GTP contacts are provided by residues 27 to 34 (AHVDHGKT), 93 to 97 (DTPGH), and 147 to 150 (NKVD). Residue histidine 603 is modified to Diphthamide.

This sequence belongs to the TRAFAC class translation factor GTPase superfamily. Classic translation factor GTPase family. EF-G/EF-2 subfamily.

Its subcellular location is the cytoplasm. In terms of biological role, catalyzes the GTP-dependent ribosomal translocation step during translation elongation. During this step, the ribosome changes from the pre-translocational (PRE) to the post-translocational (POST) state as the newly formed A-site-bound peptidyl-tRNA and P-site-bound deacylated tRNA move to the P and E sites, respectively. Catalyzes the coordinated movement of the two tRNA molecules, the mRNA and conformational changes in the ribosome. This is Elongation factor 2 (fusA) from Saccharolobus solfataricus (strain ATCC 35092 / DSM 1617 / JCM 11322 / P2) (Sulfolobus solfataricus).